The sequence spans 494 residues: MAKYVVAIDQGTTSSRAIVFDYDQNMVSVAQKEFTQIYPHEGWVEHNAAEIWATQFGVLQEAIQIAGVKPEEIAAIGITNQRETTVVWDKNTGEPIYNAIVWQCRRTAPICDELKKKGLDTYIRENTGLVVDAYFSGTKIKWILDNVPGAREKANKGELLFGTIDTWLVWKLTGGKVHVTDYTNASRTMIYNIKELKWDETILKELDIPMSMLPEVKDSSCIYGYAHINGKEVPISGIAGDQQSALFGQAGFNKGDTKNTYGTGSFILMNIGENFILSKNGLITTIAIGYNGKIEYALEGSVFIAGAVIQWVRDELRLLHDAKDTEYFATKVKDTNGVYLVPAFVGLGAPYWDMYARGCLVGITRGVNRSHIIRAAEEAIAYQSKDVIDAMVADSGVKLSSLKVDGGACRDNFLMQFQSDIINTKVLRPQITETTALGAAYLAGLAVGFWKDKDEITNRWKLEREFTPSLSEEERNKKYMGWKKAVERSRGWAL.

T12 is an ADP binding site. T12, T13, and S14 together coordinate ATP. Residue T12 participates in sn-glycerol 3-phosphate binding. Residue R16 participates in ADP binding. 4 residues coordinate sn-glycerol 3-phosphate: R82, E83, Y134, and D241. Glycerol contacts are provided by R82, E83, Y134, D241, and Q242. ADP is bound by residues T263 and G306. ATP is bound by residues T263, G306, Q310, and G407. An ADP-binding site is contributed by G407.

This sequence belongs to the FGGY kinase family.

The catalysed reaction is glycerol + ATP = sn-glycerol 3-phosphate + ADP + H(+). It participates in polyol metabolism; glycerol degradation via glycerol kinase pathway; sn-glycerol 3-phosphate from glycerol: step 1/1. With respect to regulation, inhibited by fructose 1,6-bisphosphate (FBP). Functionally, key enzyme in the regulation of glycerol uptake and metabolism. Catalyzes the phosphorylation of glycerol to yield sn-glycerol 3-phosphate. This Brachyspira hyodysenteriae (strain ATCC 49526 / WA1) protein is Glycerol kinase.